Reading from the N-terminus, the 677-residue chain is Secretogranin-1 (677 aa).

Residues 1-20 (MQPTLLLSLLGAVGLAAVNS) form the signal peptide. Cysteines 36 and 57 form a disulfide. 2 stretches are compositionally biased toward basic and acidic residues: residues 64–100 (SRKDVKDKETTENENTKFEVRLLRDPADASEAHESSS) and 118–136 (ADTEKWAEGGGHSRERADE). The interval 64-463 (SRKDVKDKET…DKARRHPQGA (400 aa)) is disordered. T79 is modified (phosphothreonine). A phosphoserine mark is found at S93, S99, and S100. S93 carries O-linked (Xyl...) (chondroitin sulfate) serine glycosylation. The segment at 116–120 (TKADT) is O-glycosylated at one site. Residue S130 is modified to Phosphoserine; by FAM20C. S149 is modified (phosphoserine). Basic and acidic residues-rich tracts occupy residues 150-162 (EEVKTRHSEKSQR), 172-190 (NYQKGERGEDSSEEKHLEE), and 200-236 (NERKQASAIKKEELVARSETHAAGHSQEKTHSREKSS). A Phosphoserine modification is found at S183. S225 carries the phosphoserine; by FAM20C modification. O-linked (Xyl...) (chondroitin sulfate) serine glycosylation is present at S239. A phosphoserine mark is found at S259 and S263. A compositionally biased stretch (acidic residues) spans 262 to 272 (ESEEGEEDATS). Positions 277-287 (RRTRPRHHHGR) are enriched in basic residues. 4 positions are modified to phosphoserine: S293, S294, S311, and S335. A Sulfotyrosine modification is found at Y341. A compositionally biased stretch (basic and acidic residues) spans 359-372 (WERYRGRGSEEYRA). 3 positions are modified to phosphoserine; by FAM20C: S367, S377, and S380. Basic and acidic residues-rich tracts occupy residues 384–415 (EDKRNYPSLELDKMAHGYGEESEEERGLEPGK) and 433–455 (DTREEKRFLGEGHHRVQENQMDK). Y401 is modified (phosphotyrosine). S405 bears the Phosphoserine mark. A Sulfotyrosine modification is found at Y474. A disordered region spans residues 475 to 512 (GEEGAPGKWQQQGDLQDTKENREEARFQDKQYSSHHTA). Over residues 490 to 503 (QDTKENREEARFQD) the composition is skewed to basic and acidic residues. Residues S533 and S534 each carry the phosphoserine modification. Y566 bears the Sulfotyrosine mark. Residue S617 is modified to Phosphoserine. The tract at residues 622–653 (DFYDSEEPVSTHQEAENEKDRADQTVLTEDEK) is disordered. Y624 carries the sulfotyrosine modification. S626 and S631 each carry phosphoserine. The span at 634–653 (QEAENEKDRADQTVLTEDEK) shows a compositional bias: basic and acidic residues.

Belongs to the chromogranin/secretogranin protein family. In terms of assembly, interacts with ITPR1 in the secretory granules. Post-translationally, extensively processed by limited proteolysis at conserved basic residues. Alternative processing are seen in different tissues. O-glycosylated. In terms of tissue distribution, detected in cerebrospinal fluid and urine (at protein level). Expressed in the adrenal medulla, and in pheochromocytoma. Not expressed in liver.

It is found in the secreted. Secretogranin-1 is a neuroendocrine secretory granule protein, which may be the precursor for other biologically active peptides. The polypeptide is Secretogranin-1 (CHGB) (Homo sapiens (Human)).